The chain runs to 987 residues: Leucine--tRNA ligase (987 aa).

Residues 69–80 carry the 'HIGH' region motif; it reads PYPSGKGLHVGH. Positions 760-764 match the 'KMSKS' region motif; the sequence is KMGKS. K763 is a binding site for ATP.

Belongs to the class-I aminoacyl-tRNA synthetase family.

It localises to the cytoplasm. The enzyme catalyses tRNA(Leu) + L-leucine + ATP = L-leucyl-tRNA(Leu) + AMP + diphosphate. This Bifidobacterium longum (strain DJO10A) protein is Leucine--tRNA ligase.